The primary structure comprises 125 residues: N-alpha-acetyltransferase 38, NatC auxiliary subunit (125 aa).

The interval 1–42 (MAGAGPTMLLREENGCCSRRQSSSSAGDSDGEQEDSPATRAR) is disordered. At Ala-2 the chain carries N-acetylalanine. Positions 18–28 (SRRQSSSSAGD) are enriched in low complexity. A phosphoserine mark is found at Ser-22, Ser-25, and Ser-29. In terms of domain architecture, Sm spans 40–118 (RARQQLEALL…IVSIEVQRES (79 aa)).

This sequence belongs to the snRNP Sm proteins family. In terms of assembly, component of the N-terminal acetyltransferase C (NatC) complex, which is composed of NAA35, NAA38 and NAA30.

It localises to the cytoplasm. Its subcellular location is the nucleus. In terms of biological role, auxillary component of the N-terminal acetyltransferase C (NatC) complex which catalyzes acetylation of N-terminal methionine residues. N-terminal acetylation protects proteins from ubiquitination and degradation by the N-end rule pathway. The sequence is that of N-alpha-acetyltransferase 38, NatC auxiliary subunit (Naa38) from Mus musculus (Mouse).